The following is a 467-amino-acid chain: Ribulose bisphosphate carboxylase large chain (467 aa).

At Lys5 the chain carries N6,N6,N6-trimethyllysine. Asn114 and Thr164 together coordinate substrate. Lys166 (proton acceptor) is an active-site residue. Lys168 is a substrate binding site. Residues Lys192, Asp194, and Glu195 each coordinate Mg(2+). An N6-carboxylysine modification is found at Lys192. The active-site Proton acceptor is the His285. Substrate-binding residues include Arg286, His318, and Ser370.

The protein belongs to the RuBisCO large chain family. Type I subfamily. Heterohexadecamer of 8 large chains and 8 small chains; disulfide-linked. The disulfide link is formed within the large subunit homodimers. Mg(2+) is required as a cofactor. In terms of processing, the disulfide bond which can form in the large chain dimeric partners within the hexadecamer appears to be associated with oxidative stress and protein turnover.

It localises to the plastid. It is found in the chloroplast. It carries out the reaction 2 (2R)-3-phosphoglycerate + 2 H(+) = D-ribulose 1,5-bisphosphate + CO2 + H2O. The enzyme catalyses D-ribulose 1,5-bisphosphate + O2 = 2-phosphoglycolate + (2R)-3-phosphoglycerate + 2 H(+). Its function is as follows. RuBisCO catalyzes two reactions: the carboxylation of D-ribulose 1,5-bisphosphate, the primary event in carbon dioxide fixation, as well as the oxidative fragmentation of the pentose substrate in the photorespiration process. Both reactions occur simultaneously and in competition at the same active site. In Tasmannia insipida (Pepperbush), this protein is Ribulose bisphosphate carboxylase large chain.